A 368-amino-acid polypeptide reads, in one-letter code: RAB6-interacting golgin (368 aa).

3 disordered regions span residues 1-43, 55-133, and 302-368; these read MAQD…REKA, DGSA…DCKV, and KQMA…AVAT. The span at 11–27 shows a compositional bias: basic and acidic residues; it reads EELRRLKQNKDPFEPQR. The segment covering 80–89 has biased composition (pro residues); it reads SPSPVAPSPL. Residues 114-133 show a composition bias toward basic and acidic residues; sequence NSHHGHKSAEVRAPKPDCKV. A coiled-coil region spans residues 145-310; the sequence is RWEVLQQEQR…AKQMASVERL (166 aa). The necessary for interaction with RCHY1 stretch occupies residues 188–368; sequence IQKELQALDD…AKNFSAAVAT (181 aa).

The protein belongs to the GORAB family. As to quaternary structure, interacts with RCHY1. Interacts with SCYL1 and RAB6A/RAB6. As to expression, expressed in small intestine, kidney, skeletal muscle, lung, spleen, brain and heart. High expression is observed in osteoblasts and skin; also expressed in osteoclasts albeit at lower levels.

It localises to the cytoplasm. Its subcellular location is the golgi apparatus. This is RAB6-interacting golgin (Gorab) from Mus musculus (Mouse).